Reading from the N-terminus, the 476-residue chain is Variant surface glycoprotein MITAT 1.2 (476 aa).

The N-terminal stretch at 1–26 (MPSNQEARLFLAVLVLAQVLPILVDS) is a signal peptide. 2 disulfide bridges follow: Cys-41/Cys-171 and Cys-149/Cys-213. Asn-289 is a glycosylation site (N-linked (GlcNAc...) asparagine). Disordered regions lie at residues 389 to 418 (QKHK…CKSP) and 435 to 459 (EEAK…TGSS). 2 disulfides stabilise this stretch: Cys-407–Cys-419 and Cys-415–Cys-430. A compositionally biased stretch (basic and acidic residues) spans 435–449 (EEAKKVADETAKDGK). Positions 450-459 (TGNTNTTGSS) are enriched in low complexity. Residue Asn-454 is glycosylated (N-linked (GlcNAc...) asparagine). Ser-459 carries GPI-anchor amidated serine lipidation. Positions 460–476 (NSFVISKTPLWLAVLLF) are cleaved as a propeptide — removed in mature form.

Homodimer.

Its subcellular location is the cell membrane. Its function is as follows. VSG forms a coat on the surface of the parasite. The trypanosome evades the immune response of the host by expressing a series of antigenically distinct VSGs from an estimated 1000 VSG genes. The sequence is that of Variant surface glycoprotein MITAT 1.2 from Trypanosoma brucei brucei.